Consider the following 359-residue polypeptide: Ferredoxin--NADP reductase (359 aa).

Asp48, Gln56, Tyr61, Ala101, Phe139, Asp304, and Ser345 together coordinate FAD.

Belongs to the ferredoxin--NADP reductase type 2 family. As to quaternary structure, homodimer. It depends on FAD as a cofactor.

The catalysed reaction is 2 reduced [2Fe-2S]-[ferredoxin] + NADP(+) + H(+) = 2 oxidized [2Fe-2S]-[ferredoxin] + NADPH. The protein is Ferredoxin--NADP reductase of Ralstonia pickettii (strain 12J).